Reading from the N-terminus, the 1203-residue chain is DNA-directed RNA polymerase subunit beta (1203 aa).

Residues 1167–1203 are disordered; that stretch reads LSKYAQQQEEQRKAAAQTDESKTAPATKNESQPNTQD. A compositionally biased stretch (polar residues) spans 1190–1203; sequence APATKNESQPNTQD.

The protein belongs to the RNA polymerase beta chain family. In terms of assembly, the RNAP catalytic core consists of 2 alpha, 1 beta, 1 beta' and 1 omega subunit. When a sigma factor is associated with the core the holoenzyme is formed, which can initiate transcription.

It carries out the reaction RNA(n) + a ribonucleoside 5'-triphosphate = RNA(n+1) + diphosphate. Its function is as follows. DNA-dependent RNA polymerase catalyzes the transcription of DNA into RNA using the four ribonucleoside triphosphates as substrates. This Levilactobacillus brevis (strain ATCC 367 / BCRC 12310 / CIP 105137 / JCM 1170 / LMG 11437 / NCIMB 947 / NCTC 947) (Lactobacillus brevis) protein is DNA-directed RNA polymerase subunit beta.